A 55-amino-acid chain; its full sequence is Large ribosomal subunit protein bL33 (55 aa).

The protein belongs to the bacterial ribosomal protein bL33 family.

The chain is Large ribosomal subunit protein bL33 from Rhodospirillum centenum (strain ATCC 51521 / SW).